A 614-amino-acid polypeptide reads, in one-letter code: Maltose permease MAL31 (614 aa).

The disordered stretch occupies residues 1 to 48; it reads MKGLSSLINRKKDRNDSHLDEIENGVNATEFNSIEMEEQGKKSDFDLS. The Cytoplasmic segment spans residues 1–108; it reads MKGLSSLINR…AAAWSLLVST (108 aa). Residues 38 to 48 are compositionally biased toward basic and acidic residues; it reads EQGKKSDFDLS. Residues 109-129 traverse the membrane as a helical segment; that stretch reads TLIQEGYDTAILGAFYALPVF. Over 130 to 144 the chain is Extracellular; sequence QKKYGSLNSNTGDYE. The helical transmembrane segment at 145 to 165 threads the bilayer; it reads ISVSWQIGLCLCYMAGEIVGL. The Cytoplasmic segment spans residues 166–180; it reads QMTGPSVDYMGNRYT. The chain crosses the membrane as a helical span at residues 181–201; sequence LIMALFFLAAFIFILYFCKSL. Residue Gly-202 is a topological domain, extracellular. A helical transmembrane segment spans residues 203–223; it reads MIAVGQALCGMPWGCFQCLTV. The Cytoplasmic segment spans residues 224-236; the sequence is SYASEICPLALRY. A helical transmembrane segment spans residues 237–257; that stretch reads YLTTYSNLCWAFGQLFAAGIM. At 258-272 the chain is on the extracellular side; it reads KNSQNKYANSELGYK. The helical transmembrane segment at 273–293 threads the bilayer; it reads LPFALQWIWPLPLAVGIFFAP. The Cytoplasmic segment spans residues 294–364; it reads ESPWWLVKKG…KDGINRRRTR (71 aa). A helical membrane pass occupies residues 365 to 385; the sequence is IACLCWIGQCSCGASLIGYST. Residues 386–398 are Extracellular-facing; that stretch reads YFYEKAGVSTDTA. A helical membrane pass occupies residues 399-419; the sequence is FTFSIIQYCLGIAATFISWWA. At 420-427 the chain is on the cytoplasmic side; it reads SKYCGRFD. The chain crosses the membrane as a helical span at residues 428–448; the sequence is LYAFGLAFQAIMFFIIGGLGC. Topologically, residues 449–460 are extracellular; sequence SDTHGAKMGSGA. Residues 461 to 481 form a helical membrane-spanning segment; the sequence is LLMVVAFFYNLGIAPVVFCLV. At 482 to 493 the chain is on the cytoplasmic side; sequence SEIPSSRLRTKT. Residues 494 to 514 traverse the membrane as a helical segment; that stretch reads IILARNAYNVIQVVVTVLIMY. Topologically, residues 515 to 526 are extracellular; that stretch reads QLNSEKWNWGAK. Residues 527–547 traverse the membrane as a helical segment; that stretch reads SGFFWGGFCLATLAWAVVDLP. Over 548-614 the chain is Cytoplasmic; that stretch reads ETAGRTFIEI…GRNTSSVVNK (67 aa). Positions 595-614 are disordered; sequence EDLETSVVDEGRNTSSVVNK.

This sequence belongs to the major facilitator superfamily. Sugar transporter (TC 2.A.1.1) family.

The protein localises to the membrane. Functionally, high-affinity uptake of maltose and maltotriose. Also transports turanose but not alpha-methylglucoside, melezitose or trehalose. This Saccharomyces cerevisiae (strain ATCC 204508 / S288c) (Baker's yeast) protein is Maltose permease MAL31 (MAL31).